We begin with the raw amino-acid sequence, 218 residues long: Riboflavin synthase (218 aa).

2 Lumazine-binding repeats span residues Met1–His97 and Ile98–Leu194. Residues Gly4–Ile6, Cys48–Thr50, Asp62–Thr67, Gly101–Val103, Lys136, Ser145–Thr147, and Thr159–Thr164 contribute to the 2,4-dihydroxypteridine site.

Homotrimer.

The enzyme catalyses 2 6,7-dimethyl-8-(1-D-ribityl)lumazine + H(+) = 5-amino-6-(D-ribitylamino)uracil + riboflavin. The protein operates within cofactor biosynthesis; riboflavin biosynthesis; riboflavin from 2-hydroxy-3-oxobutyl phosphate and 5-amino-6-(D-ribitylamino)uracil: step 2/2. Functionally, catalyzes the dismutation of two molecules of 6,7-dimethyl-8-ribityllumazine, resulting in the formation of riboflavin and 5-amino-6-(D-ribitylamino)uracil. In Photobacterium phosphoreum, this protein is Riboflavin synthase.